An 804-amino-acid polypeptide reads, in one-letter code: MSHDDMSNSSGFNEAAASFSWNGPKKAINPYLDPAEVAPESALSNLITLYAADNEQEQLRREALSEQVWERYFFNESRDPVQREMEQDKLISRAKLAHEQQRFNPDMVILADVNAQPSHISKPLMQRIEYFSSLGRPKAYSRYLRETIKPCLERLEHIRDSQLSTSFRFMASHEGLDGLLILPEMSQEQVKRLSTLVAAHMSMCLDAACGDLYATDDVKPEEIRKTWERVAAETLRLDVIPPAFEQLRRKRNRRKPVPYELIPGSLARMLCADWWYRKLWKMRCEWREEQLRAVCLVSKKASPYVSYEAVMHKREQRRKSLEFFRSHELVNEDGDTLDMEDVVNASSSNPAHRRNEMMACVKGLELIAEMRGDCAVFYTITCPSRFHSTLNNGRPNPTWTNATVRQSSDYLVGMFAAFRKAMHKAGLRWYGVRVAEPHHDGTVHWHLLCFMRKKDRRAITALLCKFAIREDREELGNNTGPRFKSELINPRKGTPTSYIAKYISKNIDGRGLAGEISKETGKSLRDNAEYVNAWASLHRVQQFRFFGIPGRQAYRELRLLAGQAARQQGDKKAGAPVLDNPRLDAILAAADAGCFATYIMKQGGVLVPRKYHLIRTAYEINEEPTAYGDHGIRIYGIWSPIAEGKICTHAVKWKMVRKAVDVQEAVADQGACAPWTRGNNCPLAENLNQQAKDKSADGDTRTDITRMDDKELHDYLHSMSKKERRELAARLRLVKPKRRKDYKQRITDHQRQQLVYELKSRGFDGSEKEVDLLLRGGSIPSGAGLRIFYRNQRLQEDDKWRNLY.

Residues tyrosine 498 and tyrosine 502 each act as O-(5'-phospho-DNA)-tyrosine intermediate in the active site.

Belongs to the phage GPA family.

Functionally, possible endonuclease which induces a single-strand cut and initiates DNA replication. The chain is Probable replication endonuclease from prophage-like region from Escherichia coli O6:H1 (strain CFT073 / ATCC 700928 / UPEC).